The following is a 446-amino-acid chain: Phosphoglucosamine mutase (446 aa).

The active-site Phosphoserine intermediate is the S100. 4 residues coordinate Mg(2+): S100, D241, D243, and D245. Position 100 is a phosphoserine (S100).

This sequence belongs to the phosphohexose mutase family. Mg(2+) is required as a cofactor. Post-translationally, activated by phosphorylation.

It catalyses the reaction alpha-D-glucosamine 1-phosphate = D-glucosamine 6-phosphate. Functionally, catalyzes the conversion of glucosamine-6-phosphate to glucosamine-1-phosphate. The protein is Phosphoglucosamine mutase of Methylorubrum populi (strain ATCC BAA-705 / NCIMB 13946 / BJ001) (Methylobacterium populi).